Reading from the N-terminus, the 1017-residue chain is Stereoselective keto-reductase af490 (1017 aa).

Residues 6–138 (NELSGSQVPG…GRLRMTFAGH (133 aa)) form an N-terminal hotdog fold region. A PKS/mFAS DH domain is found at 6–311 (NELSGSQVPG…MSPIAPSTEK (306 aa)). The segment at 8–306 (LSGSQVPGAT…LEGLTMSPIA (299 aa)) is dehydratase (DH). A C-terminal hotdog fold region spans residues 153-311 (LRPVSISPFY…MSPIAPSTEK (159 aa)). Positions 532–720 (QIRFLRAPFD…VQGGRLLIPR (189 aa)) are ketoreductase (KR).

The catalysed reaction is fumagillol + NADP(+) = 5-dehydrofumagillol + NADPH + H(+). The protein operates within secondary metabolite biosynthesis; terpenoid biosynthesis. Stereoselective keto-reductase; part of the gene cluster that mediates the biosynthesis of fumagillin, a meroterpenoid that has numerous biological activities including irreversible inhibition of human type 2 methionine aminopeptidase (METAP2). Within the pathway, the keto-reductase af490 acts as a 5-dehydrofumagillol 5-reductase that stereoselectively reduces 5-keto-fumagillol to 5R-hydroxy-seco-sesquiterpene. The pathway begins with the conversion of farnesyl pyrophosphate (FPP) to beta-trans-bergamotene by the membrane-bound beta-trans-bergamotene synthase af520. The multifunctional cytochrome P450 monooxygenase af510 then converts beta-trans-bergamotene into 5-keto-demethoxyfumagillol via several oxydation steps. 5-keto-demethoxyfumagillol is then subjected to successive C-6 hydroxylation and O-methylation by the dioxygenase af480 and O-methyltransferase af390-400, respectively, to yield 5-keto-fumagillol, which is then stereoselectively reduced by the keto-reductase af490 to 5R-hydroxy-seco-sesquiterpene. The next step is the polyketide transferase af380-catalyzed transfer of a dodecapentaenoyl group synthesized by the polyketide synthase af370 onto 5R-hydroxy-seco-sesquiterpene which leads to the production of prefumagillin. Finally, oxidative cleavage by the monooxygenase af470 converts prefumagillin to fumagillin. The polypeptide is Stereoselective keto-reductase af490 (Aspergillus fumigatus (strain ATCC MYA-4609 / CBS 101355 / FGSC A1100 / Af293) (Neosartorya fumigata)).